We begin with the raw amino-acid sequence, 257 residues long: MGLAKRIIPCLDVDNGRVVKGVQFVDIRDAGDPVEVAKRYNEQGADEITFLDITASSDDRETTVHMVEAIASQVFIPLTVGGGIRTCEDIRRMLNAGADKVGINTAAVFNPEFVREAAQRFGSQCIVVAIDAKKVSAEGEPDKWEIFTHGGRKPTGLDAVEWAKKMVEYGAGEILLTSMDRDGTKNGFDLGVTRAISEAVHVPVIASGGVGNLDHLVDGVIEGKADAVLAASIFHFGEYSIQEAKQRMTDAGIEMRL.

Active-site residues include D12 and D131.

It belongs to the HisA/HisF family. Heterodimer of HisH and HisF.

The protein resides in the cytoplasm. It carries out the reaction 5-[(5-phospho-1-deoxy-D-ribulos-1-ylimino)methylamino]-1-(5-phospho-beta-D-ribosyl)imidazole-4-carboxamide + L-glutamine = D-erythro-1-(imidazol-4-yl)glycerol 3-phosphate + 5-amino-1-(5-phospho-beta-D-ribosyl)imidazole-4-carboxamide + L-glutamate + H(+). It participates in amino-acid biosynthesis; L-histidine biosynthesis; L-histidine from 5-phospho-alpha-D-ribose 1-diphosphate: step 5/9. IGPS catalyzes the conversion of PRFAR and glutamine to IGP, AICAR and glutamate. The HisF subunit catalyzes the cyclization activity that produces IGP and AICAR from PRFAR using the ammonia provided by the HisH subunit. The polypeptide is Imidazole glycerol phosphate synthase subunit HisF (Marinomonas sp. (strain MWYL1)).